The primary structure comprises 612 residues: Bifunctional lycopene cyclase/phytoene synthase (612 aa).

The tract at residues 1–268 (MGWEYAQVHL…IVFGLIACDN (268 aa)) is lycopene beta-cyclase. 7 consecutive transmembrane segments (helical) span residues 3 to 23 (WEYAQVHLKYTIPFGVVLAAV), 31 to 51 (LDVFKLVFLITVSFFWVVKGL), 112 to 130 (LFFFVIQTFNTSLLYMILS), 148 to 168 (IAGQILFASAIIFGLVSVSSG), 171 to 191 (GMYMGLILIWACPFLLFLWSI), 203 to 223 (NTALPIALPTLYLWVVDTFAL), and 246 to 266 (IEEAVFFLLTNTLIVFGLIAC). The interval 275-612 (TFPEHFPRTK…IRVAWSALNK (338 aa)) is phytoene synthase.

In the N-terminal section; belongs to the lycopene beta-cyclase family. It in the C-terminal section; belongs to the phytoene/squalene synthase family.

The protein resides in the membrane. It catalyses the reaction all-trans-lycopene = gamma-carotene. The enzyme catalyses gamma-carotene = all-trans-beta-carotene. It carries out the reaction 2 (2E,6E,10E)-geranylgeranyl diphosphate = 15-cis-phytoene + 2 diphosphate. Its pathway is carotenoid biosynthesis; beta-carotene biosynthesis. The protein operates within carotenoid biosynthesis; phytoene biosynthesis; all-trans-phytoene from geranylgeranyl diphosphate: step 1/1. In terms of biological role, bifunctional enzyme; part of the car gene cluster that mediates the biosynthesis of neurosporaxanthin, a carboxylic apocarotenoid acting as an essential protective pigments and leading to orange pigmentation. CarAR catalyzes the first step of the pathway by converting geranylgeranyl diphosphate to phytoene, as well as the later cyclization step that transforms the carB product lycopene into gamma-carotene. CarAR also converts part of gamma-carotene into beta-carotene. Neurosporaxanthin is synthesized from geranyl-geranyl pyrophosphate (GGPP) through several enzymatic activities. Phytoene synthase activity performed by the bifunctional enzyme carAR first produces phytoene from geranyl-geranyl pyrophosphate (GGPP). The phytoene dehydrogenase carB then introduces 4 desaturations to lead to lycopene which is substrate of the carotene cyclase activity of carAR that leads to the production of gamma-carotene. CarB then performs a 5th desaturation reaction to yield torulene. Torulene is the substrate of the dioxidase carT that breaks the molecule, removing five carbon atoms to yield beta-apo-4'-carotenal, whereas the aldehyde dehydrogenase carD mediates the last step by converting beta-apo-4'-carotenal into neurosporaxanthin. This Fusarium fujikuroi (Bakanae and foot rot disease fungus) protein is Bifunctional lycopene cyclase/phytoene synthase.